We begin with the raw amino-acid sequence, 362 residues long: Aminomethyltransferase (362 aa).

It belongs to the GcvT family. The glycine cleavage system is composed of four proteins: P, T, L and H.

It carries out the reaction N(6)-[(R)-S(8)-aminomethyldihydrolipoyl]-L-lysyl-[protein] + (6S)-5,6,7,8-tetrahydrofolate = N(6)-[(R)-dihydrolipoyl]-L-lysyl-[protein] + (6R)-5,10-methylene-5,6,7,8-tetrahydrofolate + NH4(+). Its function is as follows. The glycine cleavage system catalyzes the degradation of glycine. The protein is Aminomethyltransferase of Listeria monocytogenes serotype 4b (strain CLIP80459).